Reading from the N-terminus, the 131-residue chain is Small ribosomal subunit protein uS8 (131 aa).

The protein belongs to the universal ribosomal protein uS8 family. In terms of assembly, part of the 30S ribosomal subunit. Contacts proteins S5 and S12.

Its function is as follows. One of the primary rRNA binding proteins, it binds directly to 16S rRNA central domain where it helps coordinate assembly of the platform of the 30S subunit. The sequence is that of Small ribosomal subunit protein uS8 from Methylobacillus flagellatus (strain ATCC 51484 / DSM 6875 / VKM B-1610 / KT).